Reading from the N-terminus, the 1331-residue chain is Contactin-associated protein-like 2 (1331 aa).

Positions 1–27 are cleaved as a signal peptide; it reads MLAAPRAGCGAALLLWIVSSCLCRAWT. The Extracellular portion of the chain corresponds to 28–1262; it reads APSTSQKCDE…IRNGVNRNSA (1235 aa). Positions 35–181 constitute an F5/8 type C domain; sequence CDEPLVSGLP…IGLRIEVYGC (147 aa). Cysteines 35 and 181 form a disulfide. 2 Laminin G-like domains span residues 187–368 and 373–552; these read VINF…SFSC and TVPV…IDMC. N-linked (GlcNAc...) asparagine glycosylation is found at Asn289, Asn346, Asn363, Asn379, Asn436, Asn506, Asn507, and Asn546. Cys336 and Cys368 are oxidised to a cystine. 4 disulfides stabilise this stretch: Cys520/Cys552, Cys558/Cys569, Cys563/Cys578, and Cys580/Cys590. An EGF-like 1 domain is found at 554-591; the sequence is IIDRCVPNHCERGGKCSQTWDSFKCTCDETGYTGATCH. The Fibrinogen C-terminal domain occupies 592–798; it reads NSIYEPSCEA…LRCQGDRNYW (207 aa). Asn630 and Asn735 each carry an N-linked (GlcNAc...) asparagine glycan. A Laminin G-like 3 domain is found at 799-963; sequence NAASFPNPSS…KVTSGFISGC (165 aa). 4 disulfides stabilise this stretch: Cys936–Cys963, Cys967–Cys980, Cys974–Cys989, and Cys991–Cys1001. An EGF-like 2 domain is found at 964–1002; that stretch reads SGHCTSYGTNCENGGKCLERYHGYSCDCSNTAYDGTFCN. Residues 1023-1214 form the Laminin G-like 4 domain; the sequence is ATNARDSSSR…IQGELVESNC (192 aa). Asn1116 and Asn1198 each carry an N-linked (GlcNAc...) asparagine glycan. Cysteines 1178 and 1214 form a disulfide. The helical transmembrane segment at 1263–1283 threads the bilayer; sequence IIGGVIAVVIFTILCTLVFLI. At 1284-1331 the chain is on the cytoplasmic side; that stretch reads RYMFRHKGTYHTNEAKGAESAESADAAIMNNDPNFTETIDESKKEWLI. Phosphoserine occurs at positions 1303 and 1306.

Belongs to the neurexin family. Interacts (via C-terminus) with KCNA2.

It localises to the membrane. The protein localises to the cell projection. It is found in the axon. Its subcellular location is the cell junction. The protein resides in the paranodal septate junction. Its function is as follows. Required for gap junction formation. Required, with CNTNAP1, for radial and longitudinal organization of myelinated axons. Plays a role in the formation of functional distinct domains critical for saltatory conduction of nerve impulses in myelinated nerve fibers. Demarcates the juxtaparanodal region of the axo-glial junction. In Pongo abelii (Sumatran orangutan), this protein is Contactin-associated protein-like 2 (CNTNAP2).